Reading from the N-terminus, the 334-residue chain is CRISPR-associated protein Cas1 3 (334 aa).

Mn(2+)-binding residues include Glu165, His230, and Glu245.

It belongs to the CRISPR-associated endonuclease Cas1 family. As to quaternary structure, homodimer, forms a heterotetramer with a Cas2 homodimer. Mg(2+) serves as cofactor. The cofactor is Mn(2+).

Functionally, CRISPR (clustered regularly interspaced short palindromic repeat), is an adaptive immune system that provides protection against mobile genetic elements (viruses, transposable elements and conjugative plasmids). CRISPR clusters contain spacers, sequences complementary to antecedent mobile elements, and target invading nucleic acids. CRISPR clusters are transcribed and processed into CRISPR RNA (crRNA). Acts as a dsDNA endonuclease. Involved in the integration of spacer DNA into the CRISPR cassette. This is CRISPR-associated protein Cas1 3 from Methanobrevibacter ruminantium (strain ATCC 35063 / DSM 1093 / JCM 13430 / OCM 146 / M1) (Methanobacterium ruminantium).